Here is a 315-residue protein sequence, read N- to C-terminus: Transaldolase (315 aa).

The active-site Schiff-base intermediate with substrate is Lys131.

Belongs to the transaldolase family. Type 1 subfamily. As to quaternary structure, homodimer.

Its subcellular location is the cytoplasm. The enzyme catalyses D-sedoheptulose 7-phosphate + D-glyceraldehyde 3-phosphate = D-erythrose 4-phosphate + beta-D-fructose 6-phosphate. It participates in carbohydrate degradation; pentose phosphate pathway; D-glyceraldehyde 3-phosphate and beta-D-fructose 6-phosphate from D-ribose 5-phosphate and D-xylulose 5-phosphate (non-oxidative stage): step 2/3. Transaldolase is important for the balance of metabolites in the pentose-phosphate pathway. In Actinobacillus pleuropneumoniae serotype 5b (strain L20), this protein is Transaldolase.